Reading from the N-terminus, the 166-residue chain is ATP synthase subunit b (166 aa).

Residues 10-30 form a helical membrane-spanning segment; that stretch reads LLFWMIVSFGIVFVILSKYGF.

The protein belongs to the ATPase B chain family. F-type ATPases have 2 components, F(1) - the catalytic core - and F(0) - the membrane proton channel. F(1) has five subunits: alpha(3), beta(3), gamma(1), delta(1), epsilon(1). F(0) has three main subunits: a(1), b(2) and c(10-14). The alpha and beta chains form an alternating ring which encloses part of the gamma chain. F(1) is attached to F(0) by a central stalk formed by the gamma and epsilon chains, while a peripheral stalk is formed by the delta and b chains.

The protein resides in the cell inner membrane. In terms of biological role, f(1)F(0) ATP synthase produces ATP from ADP in the presence of a proton or sodium gradient. F-type ATPases consist of two structural domains, F(1) containing the extramembraneous catalytic core and F(0) containing the membrane proton channel, linked together by a central stalk and a peripheral stalk. During catalysis, ATP synthesis in the catalytic domain of F(1) is coupled via a rotary mechanism of the central stalk subunits to proton translocation. Its function is as follows. Component of the F(0) channel, it forms part of the peripheral stalk, linking F(1) to F(0). In Parabacteroides distasonis (strain ATCC 8503 / DSM 20701 / CIP 104284 / JCM 5825 / NCTC 11152), this protein is ATP synthase subunit b.